The chain runs to 791 residues: Diacylglycerol kinase gamma (791 aa).

Disordered regions lie at residues 82–103 and 117–154; these read KPRH…ANSA and DEAC…SSSS. Positions 83 to 92 are enriched in basic and acidic residues; that stretch reads PRHETSDHPT. Polar residues predominate over residues 94-103; the sequence is GASNSEANSA. 2 consecutive EF-hand domains span residues 175–210 and 220–255; these read RPQD…MLHI and ELRP…TIPL. Positions 188, 190, 192, 199, 233, 235, 237, and 244 each coordinate Ca(2+). 2 Phorbol-ester/DAG-type zinc fingers span residues 271 to 321 and 336 to 385; these read RHAW…IPGC and QHAW…LCDG. The 135-residue stretch at 430–564 folds into the DAGKc domain; sequence PGTHPLLVLV…LDRWHLEVIP (135 aa). Positions 768 to 791 are disordered; the sequence is APMMMGPPQKSSFFSLRRKSRSKD.

Belongs to the eukaryotic diacylglycerol kinase family. Predominantly expressed in retina and in a much lesser extent in the brain. Other tissues contain extremely low levels of DGK-gamma.

The protein resides in the membrane. The protein localises to the cytoplasm. Its subcellular location is the cytosol. It localises to the cytoskeleton. The catalysed reaction is a 1,2-diacyl-sn-glycerol + ATP = a 1,2-diacyl-sn-glycero-3-phosphate + ADP + H(+). It catalyses the reaction 1,2-didecanoyl-sn-glycerol + ATP = 1,2-didecanoyl-sn-glycero-3-phosphate + ADP + H(+). The enzyme catalyses 1-octadecanoyl-2-(5Z,8Z,11Z,14Z-eicosatetraenoyl)-sn-glycerol + ATP = 1-octadecanoyl-2-(5Z,8Z,11Z,14Z-eicosatetraenoyl)-sn-glycero-3-phosphate + ADP + H(+). It carries out the reaction 1,2-di-(9Z-octadecenoyl)-sn-glycerol + ATP = 1,2-di-(9Z-octadecenoyl)-sn-glycero-3-phosphate + ADP + H(+). The catalysed reaction is 1-octadecanoyl-2-(9Z,12Z)-octadecadienoyl-sn-glycerol + ATP = 1-octadecanoyl-2-(9Z,12Z-octadecadienoyl)-sn-glycero-3-phosphate + ADP + H(+). The protein operates within lipid metabolism; glycerolipid metabolism. The activity is calcium-dependent. Requires phosphatidylserine for maximal activity. Functionally, diacylglycerol kinase that converts diacylglycerol/DAG into phosphatidic acid/phosphatidate/PA and regulates the respective levels of these two bioactive lipids. Thereby, acts as a central switch between the signaling pathways activated by these second messengers with different cellular targets and opposite effects in numerous biological processes. Has no apparent specificity with regard to the acyl compositions of diacylglycerol. Specifically expressed in the cerebellum where it controls the level of diacylglycerol which in turn regulates the activity of protein kinase C gamma. Through protein kinase C gamma, indirectly regulates the dendritic development of Purkinje cells, cerebellar long term depression and ultimately cerebellar motor coordination. The protein is Diacylglycerol kinase gamma (DGKG) of Homo sapiens (Human).